The sequence spans 329 residues: Porphobilinogen deaminase (329 aa).

Cys-250 carries the S-(dipyrrolylmethanemethyl)cysteine modification.

The protein belongs to the HMBS family. Monomer. Requires dipyrromethane as cofactor.

The catalysed reaction is 4 porphobilinogen + H2O = hydroxymethylbilane + 4 NH4(+). It functions in the pathway porphyrin-containing compound metabolism; protoporphyrin-IX biosynthesis; coproporphyrinogen-III from 5-aminolevulinate: step 2/4. Functionally, tetrapolymerization of the monopyrrole PBG into the hydroxymethylbilane pre-uroporphyrinogen in several discrete steps. The protein is Porphobilinogen deaminase of Burkholderia thailandensis (strain ATCC 700388 / DSM 13276 / CCUG 48851 / CIP 106301 / E264).